The primary structure comprises 66 residues: Putative alpha-neurotoxin RjAa44 (66 aa).

The LCN-type CS-alpha/beta domain maps to 1–60; it reads KEGYPVDWGNCKYECMSDAYCKDLCADRKAKSGYCYKLNWSCYCEGLPDDSPIKTNGHCR. Disulfide bonds link Cys-11–Cys-59, Cys-15–Cys-35, Cys-21–Cys-42, and Cys-25–Cys-44.

It belongs to the long (4 C-C) scorpion toxin superfamily. Sodium channel inhibitor family. Alpha subfamily. Expressed by the venom gland.

The protein localises to the secreted. Its function is as follows. Alpha toxins bind voltage-independently at site-3 of sodium channels (Nav) and inhibit the inactivation of the activated channels, thereby blocking neuronal transmission. The sequence is that of Putative alpha-neurotoxin RjAa44 from Rhopalurus junceus (Caribbean blue scorpion).